Reading from the N-terminus, the 508-residue chain is Phenylalanine--tRNA ligase alpha subunit (508 aa).

Ala2 carries the N-acetylalanine modification. 2 positions are modified to phosphoserine: Ser193 and Ser301. Lys311 is modified (N6-acetyllysine). Residues Thr329, 372–374 (QIE), and Tyr412 contribute to the L-phenylalanine site. Glu414 provides a ligand contact to Mg(2+). Phe438 serves as a coordination point for L-phenylalanine.

Belongs to the class-II aminoacyl-tRNA synthetase family. Phe-tRNA synthetase alpha subunit type 2 subfamily. In terms of assembly, heterotetramer; dimer of two heterodimers formed by FARSA and FARSB. Requires Mg(2+) as cofactor.

Its subcellular location is the cytoplasm. It catalyses the reaction tRNA(Phe) + L-phenylalanine + ATP = L-phenylalanyl-tRNA(Phe) + AMP + diphosphate + H(+). The sequence is that of Phenylalanine--tRNA ligase alpha subunit (Farsa) from Rattus norvegicus (Rat).